Reading from the N-terminus, the 969-residue chain is GATOR2 complex protein Wdr59 (969 aa).

Residues 1–24 form a disordered region; the sequence is MPPTETLRPGERGTAGGPGAGAPE. WD repeat units lie at residues 127-167, 172-211, 215-255, 258-303, and 307-351; these read GHTR…KPAL, VCMSGATQVGFNRVSGNLLAAAHDGDLRIWDIRKGSCPTH, AHLN…RAEK, TTMS…DPIC, and GHTD…LKLC. Phosphothreonine is present on threonine 373. An RWD domain is found at 435–538; that stretch reads HEFSLLNTNM…RALVAAMKKK (104 aa). A C4-type zinc finger spans residues 891-911; the sequence is ECRKCAKPKRTPKCEPCKRPV. Cysteine 892, cysteine 895, cysteine 904, cysteine 907, cysteine 917, cysteine 928, histidine 933, histidine 936, histidine 939, cysteine 950, cysteine 953, cysteine 955, and cysteine 957 together coordinate Zn(2+). The segment at 912 to 960 adopts an RING-type; atypical zinc-finger fold; the sequence is LFCVLCRLPVKGAANACLACGHGGHIDHMMQWFEKHNVCATCGCKCLER.

Belongs to the WD repeat WDR59 family. As to quaternary structure, component of the GATOR complex consisting of mio, Nup44A/Seh1, Im11, Nplr3, Nplr2, Wdr24, Wdr59 and Sec13. Within the GATOR complex, probable component of the GATOR2 subcomplex which is likely composed of mio, Nup44A/Seh1, Wdr24, Wdr59 and Sec13. The GATOR2 complex associates with unmet in the absence of S-adenosyl-L-methionine; the mio-Wdr24-Nup44A subcomplex is essential and sufficient for this interaction while Wdr59 and Sec13 are dispensable. This association acts as a nutrient sensor to inhibit mTORC1 signaling in the absence of methionine.

It is found in the lysosome membrane. In terms of biological role, a component of the GATOR complex, which functions as a regulator of the amino acid-sensing branch of the mTORC1 signaling pathway. The two GATOR subcomplexes, GATOR1 and GATOR2, regulate the mTORC1 pathway in order to mediate metabolic homeostasis, female gametogenesis and the response to amino acid limitation and complete starvation. GATOR2 activates the mTORC1 signaling pathway through the inhibition of the GATOR1 subcomplex, controlling the switch to cell proliferation and growth under nutrient replete conditions and during female oocyte development. Acts as an atypical component of the GATOR2 subcomplex, which can either promote or inhibit mTORC1 signaling, depending on tissues: inhibits mTORC1 activity by preventing the activity of GATOR2 in the ovary and the eye imaginal disk brain, while it promotes mTORC1 activity in the fat body. The sequence is that of GATOR2 complex protein Wdr59 from Drosophila melanogaster (Fruit fly).